Consider the following 784-residue polypeptide: MPRALWTAWVWAVISVFTEGASDQASSLSCDPTGVCDGHSRSLNSIPSGLTASVKSLDLSDNEITYVGNRDLQRCVNLKTLRLGANEIHTVEEDSFFHLRNLEYLDLSYNRLSNLSSSWFRSLYVLKFLNLLGNLYKTLGETSLFSHLPNLRTLKVGNSNSFTQIHEKDFTGLTFLEELEISAQNLQLYVPKSLKSIQNISHLILHLRQPVLLLDILIDIVSSLDYLELRDTNLHTFYFSEASISEINTSVKKLTFRNVQFTDDSFVEVVKLFNYVSGILEVEFDDCTHDGVGDFTALTLNRIRYLGNVETLTIRKLHIPQFFLFYDLSSIYPLTGKVKRVTIENSKVFLVPCLLSQHLKSLEYLDLSENLMSEETLKNSACEHAWPVLQTLVLRQNRLKSLEKTGELLLTLKNLNNLDISKNNFLSMPETCQWPGKMKQLNLSSTRIHSLTQCLPQTLEILDVSNNNLDSFSLILPQLKELYISRNKLKTLPDASFLPVLSVMRISGNIINTFSKEQLDSFPQLKALEAGGNNFICSCDFLSFAQGQQALARVLVDWPDGYRCDAPSHVRGQRVQDARLSLSECHRAAVVSAVCCALFLLLLLTGVLCHRFHGLWYMKMMWAWLQAKRKPRKAPRRDLCYDAFVSYSERDSYWVENLMVQELEHFNPPFKLCLHKRDFVPGKWIIDNIIDSIEKSRKTIFVLSESFVRSEWCKYELDFSHFRLFDENNDAAILILLEPIDKKAVPQRFCKLRKIMNTRTYLEWPTDETHREAFWLNLRAAIRS.

A signal peptide spans 1–20 (MPRALWTAWVWAVISVFTEG). At 21–587 (ASDQASSLSC…ARLSLSECHR (567 aa)) the chain is on the extracellular side. An intrachain disulfide couples Cys-30 to Cys-36. 19 LRR repeats span residues 54 to 77 (VKSL…RCVN), 78 to 101 (LKTL…HLRN), 102 to 125 (LEYL…SLYV), 126 to 150 (LKFL…HLPN), 151 to 175 (LRTL…GLTF), 176 to 199 (LEEL…SIQN), 200 to 223 (ISHL…IVSS), 224 to 250 (LDYL…INTS), 251 to 278 (VKKL…YVSG), 279 to 308 (ILEV…YLGN), 309 to 337 (VETL…LTGK), 338 to 361 (VKRV…HLKS), 362 to 388 (LEYL…AWPV), 389 to 414 (LQTL…TLKN), 415 to 437 (LNNL…WPGK), 438 to 457 (MKQL…CLPQ), 458 to 478 (TLEI…ILPQ), 479 to 500 (LKEL…FLPV), and 501 to 524 (LSVM…SFPQ). N-linked (GlcNAc...) asparagine glycosylation is present at Asn-114. A glycan (N-linked (GlcNAc...) asparagine) is linked at Asn-199. N-linked (GlcNAc...) asparagine glycosylation occurs at Asn-248. Cys-353 and Cys-382 form a disulfide bridge. Cysteines 432 and 454 form a disulfide. The N-linked (GlcNAc...) asparagine glycan is linked to Asn-442. In terms of domain architecture, LRRCT spans 525–579 (LKALEAGGNNFICSCDFLSFAQGQQALARVLVDWPDGYRCDAPSHVRGQRVQDAR). The helical transmembrane segment at 588-608 (AAVVSAVCCALFLLLLLTGVL) threads the bilayer. Residues 609–784 (CHRFHGLWYM…WLNLRAAIRS (176 aa)) are Cytoplasmic-facing. The TIR domain maps to 639-782 (LCYDAFVSYS…AFWLNLRAAI (144 aa)). A Glycyl lysine isopeptide (Lys-Gly) (interchain with G-Cter in ubiquitin) cross-link involves residue Lys-754. Positions 761–778 (YLEWPTDETHREAFWLNL) match the ATG16L1-binding motif motif.

The protein belongs to the Toll-like receptor family. Interacts with LY96, TLR1 and TLR6 (via extracellular domain). TLR2 seems to exist in heterodimers with either TLR1 or TLR6 before stimulation by the ligand. The heterodimers form bigger oligomers in response to their corresponding ligands as well as further heterotypic associations with other receptors such as CD14 and/or CD36. Binds MYD88 (via TIR domain). Interacts with TICAM1. Interacts with CNPY3. Interacts with ATG16L1. Interacts with PPP1R11. Interacts with TICAM2. Interacts with TIRAP. Ubiquitinated at Lys-754 by PPP1R11, leading to its degradation. Deubiquitinated by USP2. Post-translationally, glycosylation of Asn-442 is critical for secretion of the N-terminal ectodomain of TLR2.

The protein localises to the membrane. It localises to the cytoplasmic vesicle. The protein resides in the phagosome membrane. Its subcellular location is the membrane raft. Cooperates with LY96 to mediate the innate immune response to bacterial lipoproteins and other microbial cell wall components. Cooperates with TLR1 or TLR6 to mediate the innate immune response to bacterial lipoproteins or lipopeptides. Acts via MYD88 and TRAF6, leading to NF-kappa-B activation, cytokine secretion and the inflammatory response. May also promote apoptosis in response to lipoproteins. Forms activation clusters composed of several receptors depending on the ligand, these clusters trigger signaling from the cell surface and subsequently are targeted to the Golgi in a lipid-raft dependent pathway. Forms the cluster TLR2:TLR6:CD14:CD36 in response to diacylated lipopeptides and TLR2:TLR1:CD14 in response to triacylated lipopeptides. The chain is Toll-like receptor 2 (TLR2) from Ovis aries (Sheep).